A 63-amino-acid polypeptide reads, in one-letter code: Large ribosomal subunit protein uL29 (63 aa).

It belongs to the universal ribosomal protein uL29 family.

The sequence is that of Large ribosomal subunit protein uL29 from Escherichia coli O8 (strain IAI1).